The sequence spans 429 residues: Zinc-regulated GTPase metalloprotein activator 1 (429 aa).

The short motif at 15-22 (GELPCLVT) is the psi-PxLVp motif element. 78 to 85 (GYLGSGKS) is a GTP binding site. Zn(2+) is bound by residues Cys-136, Cys-138, and Cys-139. The CXCC motif signature appears at 136 to 139 (CLCC). GTP is bound by residues 139–143 (CSLKN) and 244–247 (NKYD). In terms of domain architecture, CobW C-terminal spans 362 to 428 (RDWEVQRTKG…SIEELLRKTL (67 aa)).

The protein belongs to the SIMIBI class G3E GTPase family. ZNG1 subfamily.

It carries out the reaction GTP + H2O = GDP + phosphate + H(+). Functionally, zinc chaperone that directly transfers zinc cofactor to target metalloproteins, thereby activating them. Catalyzes zinc insertion into the active site of methionine aminopeptidase MAP1, which function to cleave the initiator methionine from polypeptides during or after protein translation. Mechanistically, the N-terminal psi-PxLVp motif binds to the C6H2-type zinc finger of inactive form of MAP1. After formation of the docked complex, zinc is transferred from the CXCC motif in the GTPase domain of ZNG1 to the zinc binding site in the peptidase domain of MAP1 in a process requiring GTP hydrolysis. GTP/GDP exchange is required for release of active MAP1. This is Zinc-regulated GTPase metalloprotein activator 1 from Saccharomyces cerevisiae (strain ATCC 204508 / S288c) (Baker's yeast).